The chain runs to 150 residues: Large ribosomal subunit protein uL15 (150 aa).

The segment at 1 to 60 (MKLSDLRPNPGANKRRKRVGRGPGSGHGKTATRGHKGQKSRSGGLKDPRRFEGGRSTTLM) is disordered. Over residues 30 to 39 (TATRGHKGQK) the composition is skewed to basic residues. A compositionally biased stretch (basic and acidic residues) spans 44 to 53 (GLKDPRRFEG).

The protein belongs to the universal ribosomal protein uL15 family. Part of the 50S ribosomal subunit.

Its function is as follows. Binds to the 23S rRNA. This Thermus thermophilus (strain ATCC BAA-163 / DSM 7039 / HB27) protein is Large ribosomal subunit protein uL15.